The chain runs to 157 residues: Protein TIFY 8 (157 aa).

One can recognise a Tify domain in the interval 33 to 68; that stretch reads VPGTTEQLTIFYSGSMVKFDNVPREKIRYACRLRRL. Residues 126 to 147 are disordered; that stretch reads SIGAQRTGTPPSRRRIHARGKS. A compositionally biased stretch (basic residues) spans 137–147; it reads SRRRIHARGKS.

It belongs to the TIFY/JAZ family. Post-translationally, ubiquitinated. Targeted for degradation by the SCF(COI1) E3 ubiquitin ligase-proteasome pathway during jasmonate signaling.

Its function is as follows. Repressor of jasmonate responses. This chain is Protein TIFY 8, found in Oryza sativa subsp. japonica (Rice).